Reading from the N-terminus, the 450-residue chain is Glucose-6-phosphate isomerase (450 aa).

Position 39 is a phosphothreonine (T39). E291 (proton donor) is an active-site residue. Catalysis depends on residues H312 and K426.

The protein belongs to the GPI family.

Its subcellular location is the cytoplasm. The catalysed reaction is alpha-D-glucose 6-phosphate = beta-D-fructose 6-phosphate. The protein operates within carbohydrate biosynthesis; gluconeogenesis. It participates in carbohydrate degradation; glycolysis; D-glyceraldehyde 3-phosphate and glycerone phosphate from D-glucose: step 2/4. Catalyzes the reversible isomerization of glucose-6-phosphate to fructose-6-phosphate. This Bacillus cytotoxicus (strain DSM 22905 / CIP 110041 / 391-98 / NVH 391-98) protein is Glucose-6-phosphate isomerase.